The chain runs to 122 residues: Large ribosomal subunit protein uL14 (122 aa).

It belongs to the universal ribosomal protein uL14 family. In terms of assembly, part of the 50S ribosomal subunit. Forms a cluster with proteins L3 and L19. In the 70S ribosome, L14 and L19 interact and together make contacts with the 16S rRNA in bridges B5 and B8.

In terms of biological role, binds to 23S rRNA. Forms part of two intersubunit bridges in the 70S ribosome. The polypeptide is Large ribosomal subunit protein uL14 (Listeria monocytogenes serotype 4b (strain CLIP80459)).